We begin with the raw amino-acid sequence, 349 residues long: MEPTSGFAEQPGPVKAESEEQEPAQWQALPVLSEQQSGAVELILAYAAPVLDKRQTSRLLREVSAVYPLPAQPHLKRVRPSRSAGGAQSSDLLLCLAGPSAGPRSLAELLPRPAVDPRGLGTPFLVPVPARPPLTRSQFEEARAHWPTSFHEDKQVTSALAGQLFSTQERAAMQTHMERAVCAAQRAAAQGLRAVGAVVVDPASDRVLATGHDCSSVASPLLHAVMVCIDLVAQGQGRGSCDLRSHPACSFTQATATQGARAGSVRKLDEDSLPYVCTGYDLYVTREPCVMCAMALVHARIQRVFYGAPSPDGALGTLFRVHARPDLNHRFQVFRGILEDQCRQLDPDP.

The residue at position 1 (M1) is an N-acetylmethionine. The tract at residues 1–25 (MEPTSGFAEQPGPVKAESEEQEPAQ) is disordered. The 164-residue stretch at 171–334 (AAMQTHMERA…PDLNHRFQVF (164 aa)) folds into the CMP/dCMP-type deaminase domain. Zn(2+) contacts are provided by H223, C289, and C292.

This sequence belongs to the cytidine and deoxycytidylate deaminase family. ADAT3 subfamily. Zn(2+) serves as cofactor.

The polypeptide is Probable inactive tRNA-specific adenosine deaminase-like protein 3 (Adat3) (Mus musculus (Mouse)).